The sequence spans 179 residues: Large ribosomal subunit protein uL5 (179 aa).

It belongs to the universal ribosomal protein uL5 family. Part of the 50S ribosomal subunit; part of the 5S rRNA/L5/L18/L25 subcomplex. Contacts the 5S rRNA and the P site tRNA. Forms a bridge to the 30S subunit in the 70S ribosome.

Functionally, this is one of the proteins that bind and probably mediate the attachment of the 5S RNA into the large ribosomal subunit, where it forms part of the central protuberance. In the 70S ribosome it contacts protein S13 of the 30S subunit (bridge B1b), connecting the 2 subunits; this bridge is implicated in subunit movement. Contacts the P site tRNA; the 5S rRNA and some of its associated proteins might help stabilize positioning of ribosome-bound tRNAs. This chain is Large ribosomal subunit protein uL5, found in Francisella tularensis subsp. novicida (strain U112).